Here is a 1461-residue protein sequence, read N- to C-terminus: Calmodulin-regulated spectrin-associated protein 2 (1461 aa).

The region spanning 211-324 is the Calponin-homology (CH) domain; sequence PGGQKARYRK…FMAELFWWFE (114 aa). The interval 361–389 is disordered; it reads RDSSSSSDFSSRYTRPQTHSSASGGIRRS. 2 stretches are compositionally biased toward low complexity: residues 362 to 371 and 380 to 389; these read DSSSSSDFSS and SSASGGIRRS. A phosphoserine mark is found at S391 and S393. Residue T401 is modified to Phosphothreonine. Phosphoserine is present on residues S439, S572, S573, S585, and S647. 2 disordered regions span residues 573–613 and 639–704; these read SPDN…EDSS and ASNP…GSEL. T652 carries the post-translational modification Phosphothreonine. At S654 the chain carries Phosphoserine. The span at 654 to 673 shows a compositional bias: low complexity; that stretch reads STKSQPGSSASSSSGVKMTS. A compositionally biased stretch (basic and acidic residues) spans 677 to 687; sequence QKFRKLNHTDG. A coiled-coil region spans residues 730-767; it reads LLASEMVHLRMRLEEKRRAIEAQKKKMEAAFTKQRQKM. Over residues 787–826 the composition is skewed to basic and acidic residues; the sequence is REEAAGAEDEKVYTDRAKERESQKMDGQRSKSLADIKESM. Residues 787-855 form a disordered region; the sequence is REEAAGAEDE…QWNLTSPSEE (69 aa). The residue at position 836 (S836) is a Phosphoserine. Residues 861-900 adopt a coiled-coil conformation; sequence EILEYTKSIEKLNSSLHFLQQEMQRLSLQQEMLMQMREQQ. An MBD region region spans residues 896-1007; the sequence is MREQQAWVIS…IQTRSFVCFG (112 aa). Residues S905 and S910 each carry the phosphoserine modification. 5 disordered regions span residues 921 to 992, 1004 to 1044, 1069 to 1090, 1102 to 1124, and 1163 to 1321; these read RQAG…RRFS, VCFG…GEKE, NEDQ…PTAP, DLKP…DKEQ, and KETQ…EYTG. Residues 926 to 937 show a composition bias toward low complexity; sequence SSAAAPFSSDSP. A compositionally biased stretch (polar residues) spans 943 to 962; sequence SPQSSTRKSASFSVKNQRTP. A phosphothreonine mark is found at T970, T975, and T977. A phosphoserine mark is found at S981 and S992. A compositionally biased stretch (basic and acidic residues) spans 1011–1028; the sequence is EPQKEPKQKEEIKKEPSE. Pro residues predominate over residues 1077 to 1089; sequence TEPPPKPVFPPTA. Basic and acidic residues-rich tracts occupy residues 1104–1124 and 1163–1224; these read KPPE…DKEQ and KETQ…DTVI. A Phosphoserine modification is found at S1120. Residues 1138–1210 adopt a coiled-coil conformation; that stretch reads KDDQKAENDM…REFIRQEYMR (73 aa). Residues 1259–1271 are compositionally biased toward polar residues; that stretch reads SSLSLASLNTGDS. Phosphoserine occurs at positions 1285, 1291, and 1293. The span at 1306–1318 shows a compositional bias: polar residues; it reads NASTTSSVASGTE. Residues 1321–1455 form the CKK domain; sequence GPKLYKEPSA…QTKRPVTPKK (135 aa).

This sequence belongs to the CAMSAP1 family. In terms of assembly, interacts with CAMSAP3. Interacts with KATNA1 and KATNB1; leading to regulate the length of CAMSAP2-decorated microtubule stretches. Interacts with a complex formed by AKAP9 and PDE4DIP isoform 2/MMG8/SMYLE, which recruits CAMSAP2 to the Golgi. Interacts with MAPRE1/EB1.

It is found in the cytoplasm. The protein localises to the cytoskeleton. Its subcellular location is the golgi apparatus. The protein resides in the cilium basal body. Its function is as follows. Key microtubule-organizing protein that specifically binds the minus-end of non-centrosomal microtubules and regulates their dynamics and organization. Specifically recognizes growing microtubule minus-ends and autonomously decorates and stabilizes microtubule lattice formed by microtubule minus-end polymerization. Acts on free microtubule minus-ends that are not capped by microtubule-nucleating proteins or other factors and protects microtubule minus-ends from depolymerization. In addition, it also reduces the velocity of microtubule polymerization. Through the microtubule cytoskeleton, also regulates the organization of cellular organelles including the Golgi and the early endosomes. Essential for the tethering, but not for nucleation of non-centrosomal microtubules at the Golgi: together with Golgi-associated proteins AKAP9 and PDE4DIP, required to tether non-centrosomal minus-end microtubules to the Golgi, an important step for polarized cell movement. Also acts as a regulator of neuronal polarity and development: localizes to non-centrosomal microtubule minus-ends in neurons and stabilizes non-centrosomal microtubules, which is required for neuronal polarity, axon specification and dendritic branch formation. Through the microtubule cytoskeleton, regulates the autophagosome transport. This chain is Calmodulin-regulated spectrin-associated protein 2, found in Mus musculus (Mouse).